The primary structure comprises 406 residues: Phosphatidylinositol 5-phosphate 4-kinase type-2 alpha (406 aa).

A2 is subject to N-acetylalanine. Residue T3 is modified to Phosphothreonine. S14 is subject to Phosphoserine. The PIPK domain occupies 33 to 405; that stretch reads ASDPLLSVLM…RFLDFIGHIL (373 aa). Positions 59-65 are required for interaction with PIP5K1A; it reads VMLMPDD. 2 positions are modified to N6-acetyllysine: K89 and K145. The interval 288 to 329 is disordered; it reads QEEVECEENDGEEEGESDGTHPVGTPPDSPGNTLNSSPPLAP. Over residues 289-304 the composition is skewed to acidic residues; sequence EEVECEENDGEEEGES.

As to quaternary structure, homodimer. Interacts with PIP4K2B; the interaction may regulate localization to the nucleus. Probably interacts with PIP5K1A; the interaction inhibits PIP5K1A kinase activity. In terms of processing, phosphorylated in tyrosines. Phosphorylation is induced by light and increases kinase activity. In terms of tissue distribution, expressed ubiquitously, with high levels in the brain. Present in most tissues, except notably skeletal muscle and small intestine.

The protein localises to the cell membrane. Its subcellular location is the nucleus. It localises to the lysosome. It is found in the cytoplasm. The protein resides in the photoreceptor inner segment. The protein localises to the cell projection. Its subcellular location is the cilium. It localises to the photoreceptor outer segment. It catalyses the reaction a 1,2-diacyl-sn-glycero-3-phospho-(1D-myo-inositol-5-phosphate) + ATP = a 1,2-diacyl-sn-glycero-3-phospho-(1D-myo-inositol-4,5-bisphosphate) + ADP + H(+). The catalysed reaction is 1,2-dihexadecanoyl-sn-glycero-3-phospho-(1D-myo-inositol-5-phosphate) + ATP = 1,2-dihexadecanoyl-sn-glycero-3-phospho-(1D-myo-inositol-4,5-bisphosphate) + ADP + H(+). The enzyme catalyses 1,2-dihexadecanoyl-sn-glycero-3-phospho-(1D-myo-inositol-5-phosphate) + GTP = 1,2-dihexadecanoyl-sn-glycero-3-phospho-(1D-myo-inositol-4,5-bisphosphate) + GDP + H(+). In rod outer segments, activated by light. Inhibited by I-OMe tyrphostin AG-538 (I-OMe-AG-538), acting as an ATP-competitive inhibitor. In terms of biological role, catalyzes the phosphorylation of phosphatidylinositol 5-phosphate (PtdIns5P) on the fourth hydroxyl of the myo-inositol ring, to form phosphatidylinositol 4,5-bisphosphate (PtdIns(4,5)P2). Has both ATP- and GTP-dependent kinase activities. May exert its function by regulating the levels of PtdIns5P, which functions in the cytosol by increasing AKT activity and in the nucleus signals through ING2. May regulate the pool of cytosolic PtdIns5P in response to the activation of tyrosine phosphorylation. Required for lysosome-peroxisome membrane contacts and intracellular cholesterol transport through modulating peroxisomal PtdIns(4,5)P2 level. In collaboration with PIP4K2B, has a role in mediating autophagy in times of nutrient stress. Required for autophagosome-lysosome fusion and the regulation of cellular lipid metabolism. May be involved in thrombopoiesis, and the terminal maturation of megakaryocytes and regulation of their size. Negatively regulates insulin signaling through a catalytic-independent mechanism. PIP4Ks interact with PIP5Ks and suppress PIP5K-mediated PtdIns(4,5)P2 synthesis and insulin-dependent conversion to PtdIns(3,4,5)P3. The chain is Phosphatidylinositol 5-phosphate 4-kinase type-2 alpha from Homo sapiens (Human).